A 131-amino-acid chain; its full sequence is Small ribosomal subunit protein uS11 (131 aa).

It belongs to the universal ribosomal protein uS11 family. Part of the 30S ribosomal subunit. Interacts with proteins S7 and S18. Binds to IF-3.

Its function is as follows. Located on the platform of the 30S subunit, it bridges several disparate RNA helices of the 16S rRNA. Forms part of the Shine-Dalgarno cleft in the 70S ribosome. The polypeptide is Small ribosomal subunit protein uS11 (Clostridium acetobutylicum (strain ATCC 824 / DSM 792 / JCM 1419 / IAM 19013 / LMG 5710 / NBRC 13948 / NRRL B-527 / VKM B-1787 / 2291 / W)).